The chain runs to 900 residues: Serine-rich coiled-coil domain-containing protein 1 (900 aa).

Disordered regions lie at residues 1 to 100 and 156 to 178; these read MGDS…HSNM and KSEG…QSTR. The span at 29 to 56 shows a compositional bias: low complexity; that stretch reads LPSSPSSSNTVGVHSSSPSSTNSSSGST. Over residues 81-100 the composition is skewed to polar residues; sequence EPTNQNLSISNGAQPGHSNM. Residues 673–707 adopt a coiled-coil conformation; that stretch reads MKDECSMLKLQLKEKDELISQLQEELGKVRHLQKA.

This sequence belongs to the CCSER family.

In Homo sapiens (Human), this protein is Serine-rich coiled-coil domain-containing protein 1 (CCSER1).